We begin with the raw amino-acid sequence, 190 residues long: Heme-binding protein 1 (190 aa).

Belongs to the HEBP family. Monomer.

It localises to the cytoplasm. Its function is as follows. May bind free porphyrinogens that may be present in the cell and thus facilitate removal of these potentially toxic compound. Binds with a high affinity to one molecule of heme or porphyrins. It binds metalloporphyrins, free porphyrins and N-methylprotoporphyrin with similar affinities. The chain is Heme-binding protein 1 (hebp1) from Xenopus tropicalis (Western clawed frog).